Reading from the N-terminus, the 96-residue chain is Progonadoliberin-1 (96 aa).

Residues 1 to 26 (MHRKMAVKTLSVWLLLVGTLVPQHCC) form the signal peptide. Residue glutamine 27 is modified to Pyrrolidone carboxylic acid. Glycine 36 is modified (glycine amide).

It belongs to the GnRH family. In terms of tissue distribution, preoptic area of the brain.

It localises to the secreted. Stimulates the secretion of gonadotropins. This chain is Progonadoliberin-1 (gnrh1), found in Verasper moseri (Barfin flounder).